A 568-amino-acid chain; its full sequence is Phosphoprotein (568 aa).

The segment at 1-25 (MDQDAFFSERDPEAEGETPRKQESL) is disordered. A compositionally biased stretch (basic and acidic residues) spans 7–24 (FSERDPEAEGETPRKQES). The segment at 33–41 (DVVLSYKPT) is N0 binding. The disordered stretch occupies residues 55–322 (DNSKENKPSC…TTANEEGTSN (268 aa)). 4 stretches are compositionally biased toward basic and acidic residues: residues 56 to 105 (NSKE…HARI), 132 to 144 (RNTR…PNER), 151 to 167 (PTDE…KREE), and 175 to 190 (EEVR…REGR). The segment covering 191–216 (TNNNGRSMETSSTHSTRITDVITNPS) has biased composition (polar residues). Residues 239 to 265 (TRSERTQNSELHKSTSEDSSNLEDHNT) show a composition bias toward basic and acidic residues. The span at 294–304 (YTTNNANNNTK) shows a compositional bias: low complexity. Residues 344 to 411 (FELSRSASHV…SSRDLHKRFS (68 aa)) are multimerization. A coiled-coil region spans residues 387 to 416 (EENRTLLKQIQEEIDSSRDLHKRFSEYQKE). The interval 412–445 (EYQKEQNSLMMANLSTLHIITDRGGKTGDPSDTT) is l protein binding. Disordered stretches follow at residues 434 to 455 (RGGK…TKGK) and 494 to 513 (VLEE…LIPS). Positions 441 to 450 (PSDTTRSPSV) are enriched in polar residues. Residues 479–568 (DLIREDELRD…FEEDIDSLTN (90 aa)) form an interaction with the nucleocapsid (N-RNA) region.

The protein belongs to the respirovirus P protein family. In terms of assembly, homotetramer. Interacts (via multimerization domain) with polymerase L; this interaction forms the polymerase complex. Interacts (via N-terminus) with N0; this interaction allows P to chaperon N0 before encapsidation and form the N-P complex. Interacts (via C-terminus) with N-RNA template; this interaction positions the polymerase on the template.

Functionally, essential cofactor of the RNA polymerase L that plays a central role in the transcription and replication by forming the polymerase complex with RNA polymerase L and recruiting L to the genomic N-RNA template for RNA synthesis. Also plays a central role in the encapsidation of nascent RNA chains by forming the encapsidation complex with the nucleocapsid protein N (N-P complex). Acts as a chaperone for newly synthesized free N protein, so-called N0, allowing encapsidation of nascent RNA chains during replication. The nucleoprotein protein N prevents excessive phosphorylation of P, which leads to down-regulation of viral transcription/ replication. Participates, together with N, in the formation of viral factories (viroplasms), which are large inclusions in the host cytoplasm where replication takes place. Recruits host PI4KB and remodel the host endoplasmic reticulum membrane to form viral replication factories. The polypeptide is Phosphoprotein (P/C) (Human parainfluenza 1 virus (strain CI-5/73) (HPIV-1)).